The following is a 156-amino-acid chain: Small ribosomal subunit protein uS7 (156 aa).

Belongs to the universal ribosomal protein uS7 family. Part of the 30S ribosomal subunit. Contacts proteins S9 and S11.

In terms of biological role, one of the primary rRNA binding proteins, it binds directly to 16S rRNA where it nucleates assembly of the head domain of the 30S subunit. Is located at the subunit interface close to the decoding center, probably blocks exit of the E-site tRNA. The polypeptide is Small ribosomal subunit protein uS7 (Ruminiclostridium cellulolyticum (strain ATCC 35319 / DSM 5812 / JCM 6584 / H10) (Clostridium cellulolyticum)).